The chain runs to 405 residues: Acetate kinase (405 aa).

Asn7 contributes to the Mg(2+) binding site. Lys14 lines the ATP pocket. Arg99 contacts substrate. Asp156 functions as the Proton donor/acceptor in the catalytic mechanism. Residue 215–219 (HLGNG) coordinates ATP. Glu391 contacts Mg(2+).

It belongs to the acetokinase family. Homodimer. Requires Mg(2+) as cofactor. Mn(2+) is required as a cofactor.

Its subcellular location is the cytoplasm. The enzyme catalyses acetate + ATP = acetyl phosphate + ADP. The protein operates within metabolic intermediate biosynthesis; acetyl-CoA biosynthesis; acetyl-CoA from acetate: step 1/2. In terms of biological role, catalyzes the formation of acetyl phosphate from acetate and ATP. Can also catalyze the reverse reaction. In Trichormus variabilis (strain ATCC 29413 / PCC 7937) (Anabaena variabilis), this protein is Acetate kinase.